A 338-amino-acid polypeptide reads, in one-letter code: MMKKIAVLGAGSWGSILANLLDENGHSVRLWSYSPAQVTELNEKHTNERYVPDFKYSETLTAYSNLTQAIDGADVILFVVPTKAIREVAQQVTAVLAKTHQRPIIVHASKGLEQETHKRLSQVLAEEIPTELRQAIVVLSGPSHAEEVARHDITLITAASADESAAELVQQLFMNDYFRIYTNTDVVGVELGAALKNIIALGAGALHGLGYGDDAKAALMTRGLAEISRLGVALGAEPLTFIGLSGVGDLIVTATSVHSRNWRAGNELGAGQDLKTVIDTMGMVIEGIPSTKAAYELAQQQNIEMPITEAIYDVLYKSADIKEVIPQLMRREGKPEIQ.

Residues Ser-12, Trp-13, and Lys-110 each coordinate NADPH. Positions 110, 141, and 143 each coordinate sn-glycerol 3-phosphate. Residue Ala-145 coordinates NADPH. Residues Lys-196, Asp-249, Ser-259, Arg-260, and Asn-261 each coordinate sn-glycerol 3-phosphate. Lys-196 acts as the Proton acceptor in catalysis. Residue Arg-260 participates in NADPH binding. NADPH is bound by residues Val-284 and Glu-286.

The protein belongs to the NAD-dependent glycerol-3-phosphate dehydrogenase family.

It localises to the cytoplasm. It catalyses the reaction sn-glycerol 3-phosphate + NAD(+) = dihydroxyacetone phosphate + NADH + H(+). The catalysed reaction is sn-glycerol 3-phosphate + NADP(+) = dihydroxyacetone phosphate + NADPH + H(+). The protein operates within membrane lipid metabolism; glycerophospholipid metabolism. Its function is as follows. Catalyzes the reduction of the glycolytic intermediate dihydroxyacetone phosphate (DHAP) to sn-glycerol 3-phosphate (G3P), the key precursor for phospholipid synthesis. This chain is Glycerol-3-phosphate dehydrogenase [NAD(P)+], found in Lactiplantibacillus plantarum (strain ATCC BAA-793 / NCIMB 8826 / WCFS1) (Lactobacillus plantarum).